Here is a 206-residue protein sequence, read N- to C-terminus: 3-demethoxyubiquinol 3-hydroxylase (206 aa).

Fe cation contacts are provided by Glu-55, Glu-85, His-88, Glu-137, Glu-169, and His-172.

The protein belongs to the COQ7 family. Fe cation serves as cofactor.

The protein localises to the cell membrane. The enzyme catalyses a 5-methoxy-2-methyl-3-(all-trans-polyprenyl)benzene-1,4-diol + AH2 + O2 = a 3-demethylubiquinol + A + H2O. It functions in the pathway cofactor biosynthesis; ubiquinone biosynthesis. Functionally, catalyzes the hydroxylation of 2-nonaprenyl-3-methyl-6-methoxy-1,4-benzoquinol during ubiquinone biosynthesis. In Azoarcus sp. (strain BH72), this protein is 3-demethoxyubiquinol 3-hydroxylase.